The sequence spans 232 residues: Aquaporin Z (232 aa).

The next 2 membrane-spanning stretches (helical) occupy residues 8 to 28 and 33 to 53; these read AFGT…AAGF and IGLL…AFAI. An NPA 1 motif is present at residues 62–64; sequence NPA. Helical transmembrane passes span 84–104, 130–150, and 159–179; these read IIAQ…IATG, MLAA…VIMG, and GFAP…SIPV. An NPA 2 motif is present at residues 185–187; it reads NPA. Residues 201-221 form a helical membrane-spanning segment; the sequence is VSQLWLFWVAPIVGGVLGAVI.

The protein belongs to the MIP/aquaporin (TC 1.A.8) family. In terms of assembly, homotetramer.

It localises to the cell inner membrane. The catalysed reaction is H2O(in) = H2O(out). Its function is as follows. Channel that permits osmotically driven movement of water in both directions. It is involved in the osmoregulation and in the maintenance of cell turgor during volume expansion in rapidly growing cells. It mediates rapid entry or exit of water in response to abrupt changes in osmolarity. This is Aquaporin Z from Vibrio parahaemolyticus serotype O3:K6 (strain RIMD 2210633).